Reading from the N-terminus, the 1413-residue chain is DNA-directed RNA polymerase subunit beta' (1413 aa).

Zn(2+) is bound by residues C70, C72, C85, and C88. Mg(2+) contacts are provided by D460, D462, and D464. The Zn(2+) site is built by C814, C888, C895, and C898.

It belongs to the RNA polymerase beta' chain family. In terms of assembly, the RNAP catalytic core consists of 2 alpha, 1 beta, 1 beta' and 1 omega subunit. When a sigma factor is associated with the core the holoenzyme is formed, which can initiate transcription. Requires Mg(2+) as cofactor. Zn(2+) is required as a cofactor.

The catalysed reaction is RNA(n) + a ribonucleoside 5'-triphosphate = RNA(n+1) + diphosphate. DNA-dependent RNA polymerase catalyzes the transcription of DNA into RNA using the four ribonucleoside triphosphates as substrates. This is DNA-directed RNA polymerase subunit beta' from Bordetella avium (strain 197N).